The following is a 514-amino-acid chain: Putative fucosyltransferase 10 (514 aa).

5 N-linked (GlcNAc...) asparagine glycosylation sites follow: asparagine 185, asparagine 210, asparagine 355, asparagine 377, and asparagine 456.

It belongs to the glycosyltransferase 37 family. As to expression, expressed in root, leaves, stems and seedlings.

The protein resides in the golgi apparatus. The protein operates within protein modification; protein glycosylation. Functionally, may be involved in cell wall biosynthesis. May act as a fucosyltransferase. The polypeptide is Putative fucosyltransferase 10 (FUT10) (Arabidopsis thaliana (Mouse-ear cress)).